A 352-amino-acid polypeptide reads, in one-letter code: Extracellular minor metalloprotease (352 aa).

Disordered stretches follow at residues 41–86 (GNKP…QPRR) and 144–164 (TARS…ELTH). A compositionally biased stretch (basic and acidic residues) spans 48 to 57 (PTEKNARAGE). 2 stretches are compositionally biased toward low complexity: residues 71–85 (ARQT…QQPR) and 144–156 (TARS…SPST). H160 is a binding site for Zn(2+). Residue E161 is part of the active site. Zn(2+) contacts are provided by H164 and E184. Residue H262 is the Proton donor of the active site. Residues 303–325 (TPTSDHLRPRHGETRAGLRTKRG) are disordered. Residues 304–325 (PTSDHLRPRHGETRAGLRTKRG) are compositionally biased toward basic and acidic residues.

Belongs to the peptidase M4 family. Zn(2+) is required as a cofactor.

It localises to the secreted. This is Extracellular minor metalloprotease (smp) from Serratia marcescens (strain ATCC 21074 / E-15).